The sequence spans 219 residues: Putative NAD(P)H nitroreductase SSP0379 (219 aa).

This sequence belongs to the nitroreductase family. Requires FMN as cofactor.

This chain is Putative NAD(P)H nitroreductase SSP0379, found in Staphylococcus saprophyticus subsp. saprophyticus (strain ATCC 15305 / DSM 20229 / NCIMB 8711 / NCTC 7292 / S-41).